A 1009-amino-acid chain; its full sequence is DENN domain-containing protein 2A (1009 aa).

Disordered regions lie at residues 15-153 (AEAS…LRFQ), 171-334 (KDGS…HRKS), 434-479 (KLLD…KKRK), and 498-532 (KRVKRLSQSMESNSGKVTDENSESDSDTEEKLKAH). Composition is skewed to basic and acidic residues over residues 45 to 59 (NIKDKISEWEGKKEV), 130 to 147 (QPEREVDPSWGRGREPRL), 218 to 247 (HPSDLEGREPTPELVEDRKGSCRRPWDRSL), and 275 to 284 (HAGEGDKDGK). Residues 297–314 (PPLPSLPPPPLPSSPPPS) show a composition bias toward pro residues. Residues 434-443 (KLLDTRKLSR) show a composition bias toward basic and acidic residues. Polar residues predominate over residues 503–513 (LSQSMESNSGK). At S551 the chain carries Phosphoserine. A uDENN domain is found at 566–715 (EYFVVVSLHK…PFPALGKTIL (150 aa)). One can recognise a cDENN domain in the interval 737–870 (RLEHVDFESL…LQVALEHILE (134 aa)). One can recognise a dDENN domain in the interval 872–969 (RNELACEQDE…QERELRRQDA (98 aa)).

The protein resides in the cytoplasm. It localises to the cytoskeleton. Guanine nucleotide exchange factor (GEF) which may activate RAB9A and RAB9B. Promotes the exchange of GDP to GTP, converting inactive GDP-bound Rab proteins into their active GTP-bound form. May play a role in late endosomes back to trans-Golgi network/TGN transport. The chain is DENN domain-containing protein 2A (DENND2A) from Homo sapiens (Human).